Consider the following 510-residue polypeptide: Bifunctional purine biosynthesis protein PurH (510 aa).

In terms of domain architecture, MGS-like spans 1 to 142 (MRALLSVSDK…KNFKDVLIVT (142 aa)).

This sequence belongs to the PurH family.

The catalysed reaction is (6R)-10-formyltetrahydrofolate + 5-amino-1-(5-phospho-beta-D-ribosyl)imidazole-4-carboxamide = 5-formamido-1-(5-phospho-D-ribosyl)imidazole-4-carboxamide + (6S)-5,6,7,8-tetrahydrofolate. The enzyme catalyses IMP + H2O = 5-formamido-1-(5-phospho-D-ribosyl)imidazole-4-carboxamide. Its pathway is purine metabolism; IMP biosynthesis via de novo pathway; 5-formamido-1-(5-phospho-D-ribosyl)imidazole-4-carboxamide from 5-amino-1-(5-phospho-D-ribosyl)imidazole-4-carboxamide (10-formyl THF route): step 1/1. It functions in the pathway purine metabolism; IMP biosynthesis via de novo pathway; IMP from 5-formamido-1-(5-phospho-D-ribosyl)imidazole-4-carboxamide: step 1/1. This Campylobacter concisus (strain 13826) protein is Bifunctional purine biosynthesis protein PurH.